The primary structure comprises 156 residues: Large ribosomal subunit protein bL9 (156 aa).

It belongs to the bacterial ribosomal protein bL9 family.

Functionally, binds to the 23S rRNA. This is Large ribosomal subunit protein bL9 from Treponema pallidum (strain Nichols).